Reading from the N-terminus, the 193-residue chain is Thymidine kinase (193 aa).

Residues 9–16 and 87–90 each bind ATP; these read STMNAGKS and DEAQ. Residue glutamate 88 is the Proton acceptor of the active site. The Zn(2+) site is built by cysteine 145, cysteine 147, cysteine 182, and histidine 185.

It belongs to the thymidine kinase family. Homotetramer.

It is found in the cytoplasm. The enzyme catalyses thymidine + ATP = dTMP + ADP + H(+). The sequence is that of Thymidine kinase from Haemophilus influenzae (strain ATCC 51907 / DSM 11121 / KW20 / Rd).